We begin with the raw amino-acid sequence, 124 residues long: Acidic phospholipase A2 (124 aa).

Disulfide bonds link Cys-26-Cys-117, Cys-28-Cys-44, Cys-43-Cys-97, Cys-49-Cys-124, Cys-50-Cys-90, Cys-57-Cys-83, and Cys-77-Cys-88. Tyr-27, Gly-29, and Gly-31 together coordinate Ca(2+). The active site involves His-47. Asp-48 provides a ligand contact to Ca(2+). The active site involves Glu-89.

This sequence belongs to the phospholipase A2 family. Group II subfamily. D49 sub-subfamily. Ca(2+) is required as a cofactor. In terms of tissue distribution, expressed by the venom gland.

It localises to the secreted. The catalysed reaction is a 1,2-diacyl-sn-glycero-3-phosphocholine + H2O = a 1-acyl-sn-glycero-3-phosphocholine + a fatty acid + H(+). Snake venom phospholipase A2 (PLA2) that inhibits collagen- and ADP-induced platelet aggregation. PLA2 catalyzes the calcium-dependent hydrolysis of the 2-acyl groups in 3-sn-phosphoglycerides. This Bothrops jararaca (Jararaca) protein is Acidic phospholipase A2.